The following is a 213-amino-acid chain: MVLLLNCIVAVDQNMGIGKKGHLPWPLLINDFKYFQRMTTSSVKNKQNLVIMGKNTWFSIPEKNRPLKDRINLVLSKKLKEIPHGAHFLARSLNDALKLIEQPELVNKVDRVWIIGGSSVYKDAMNYSSHLKLFVTRIMQSFETDTFFPEIDLKNYKLLIEYPGVPSNTQEEKGIKYKFEVYEKIVNTFLFKSHAGLTCSVKPKEASYDFELS.

The region spanning 4 to 184 is the DHFR domain; that stretch reads LLNCIVAVDQ…IKYKFEVYEK (181 aa). NADP(+) is bound by residues Ala-10 and 16-22; that span reads GIGKKGH. Substrate is bound at residue 31–36; sequence DFKYFQ. 54 to 56 serves as a coordination point for NADP(+); that stretch reads KNT. Arg-70 serves as a coordination point for substrate. Residues 76-78 and 116-123 each bind NADP(+); these read SKK and GGSSVYKD.

This sequence belongs to the dihydrofolate reductase family.

It carries out the reaction (6S)-5,6,7,8-tetrahydrofolate + NADP(+) = 7,8-dihydrofolate + NADPH + H(+). It participates in cofactor biosynthesis; tetrahydrofolate biosynthesis; 5,6,7,8-tetrahydrofolate from 7,8-dihydrofolate: step 1/1. Functionally, key enzyme in folate metabolism. Catalyzes an essential reaction for de novo glycine and purine synthesis, and for DNA precursor synthesis. The polypeptide is Viral dihydrofolate reductase (DHFR) (Saimiri sciureus (Common squirrel monkey)).